Consider the following 239-residue polypeptide: MDTLTHLSHTLREAMSDIVPESHPEHPFNLIPELCRKFYDLGWATGTGGGISIKMGENYYIAPSGVQKERIKPNEIFVLNASQDVVEEPRTEKQLKISECTPLFFNAYRMRGAGACLHTHSANCVLISLLCDREFRISHIEMIKGIINNETKKALGFRDTLVIPIIENTDFERDLTASMAECMERYPESCAVLVRRHGMYVWSDTWQKAKGAVECIDYLMGLAIRMRTLGLEWEPKDVK.

Cys100 is a substrate binding site. Positions 118 and 120 each coordinate Zn(2+). The Proton donor/acceptor role is filled by Glu141. His197 contributes to the Zn(2+) binding site.

It belongs to the aldolase class II family. MtnB subfamily. Zn(2+) is required as a cofactor.

Its subcellular location is the cytoplasm. The catalysed reaction is 5-(methylsulfanyl)-D-ribulose 1-phosphate = 5-methylsulfanyl-2,3-dioxopentyl phosphate + H2O. It participates in amino-acid biosynthesis; L-methionine biosynthesis via salvage pathway; L-methionine from S-methyl-5-thio-alpha-D-ribose 1-phosphate: step 2/6. Functionally, catalyzes the dehydration of methylthioribulose-1-phosphate (MTRu-1-P) into 2,3-diketo-5-methylthiopentyl-1-phosphate (DK-MTP-1-P). This is Probable methylthioribulose-1-phosphate dehydratase from Leishmania major.